A 359-amino-acid polypeptide reads, in one-letter code: DNA replication and repair protein RecF (359 aa).

30–37 provides a ligand contact to ATP; that stretch reads GPNGSGKT.

It belongs to the RecF family.

It is found in the cytoplasm. The RecF protein is involved in DNA metabolism; it is required for DNA replication and normal SOS inducibility. RecF binds preferentially to single-stranded, linear DNA. It also seems to bind ATP. This Vibrio parahaemolyticus serotype O3:K6 (strain RIMD 2210633) protein is DNA replication and repair protein RecF.